A 316-amino-acid chain; its full sequence is Neutrophil-stimulating factor 1 (316 aa).

Positions 1–21 (METSLPITVVFLIVLITGAQT) are cleaved as a signal peptide. Positions 126-316 (HGEMLERMTA…WFAVSWNDRG (191 aa)) are involved in interaction with human CD47. Asn169 carries N-linked (GlcNAc...) asparagine glycosylation.

As to quaternary structure, interacts with human CD4. Interacts with human CD47; the interaction results in inhibition of phagocytosis activity of host macrophages. As to expression, female salivary gland (at protein level). Saliva (at protein level). Some expression in ovary and midgut (at protein level).

The protein resides in the secreted. Its function is as follows. Activates host neutrophils; induces expression of IL1B and CXCL2 at the bite site. Promotes activation of human CD4(+) T-cells. Inhibits phagocytosis activity of host macrophages via the interaction with CD47 receptor on their surface. Suppresses expression of pro-inflammatory cytokines, such as IFN-gamma/IFNG, IL2, TNF-alpha/TNF, IL12B, IL8/CXCL8, IL6, in host white blood cells. Reduces host polymorphonuclear neutrophil chemotaxis induced by N-formylmethionine-leucylphenylalanine (fMLF). Reduces CD11b/ITGAM expression in fMLF-induced host polymorphonuclear neutrophils. (Microbial infection) Enhances early replication of Zika virus in the host. The polypeptide is Neutrophil-stimulating factor 1 (Aedes aegypti (Yellowfever mosquito)).